Reading from the N-terminus, the 449-residue chain is UDP-N-acetylglucosamine 1-carboxyvinyltransferase (449 aa).

51–52 (KN) serves as a coordination point for phosphoenolpyruvate. UDP-N-acetyl-alpha-D-glucosamine is bound at residue arginine 121. Residue cysteine 145 is the Proton donor of the active site. The residue at position 145 (cysteine 145) is a 2-(S-cysteinyl)pyruvic acid O-phosphothioketal. UDP-N-acetyl-alpha-D-glucosamine is bound by residues 150–154 (RPVDQ), aspartate 333, and isoleucine 355.

This sequence belongs to the EPSP synthase family. MurA subfamily.

The protein resides in the cytoplasm. The enzyme catalyses phosphoenolpyruvate + UDP-N-acetyl-alpha-D-glucosamine = UDP-N-acetyl-3-O-(1-carboxyvinyl)-alpha-D-glucosamine + phosphate. Its pathway is cell wall biogenesis; peptidoglycan biosynthesis. Functionally, cell wall formation. Adds enolpyruvyl to UDP-N-acetylglucosamine. This chain is UDP-N-acetylglucosamine 1-carboxyvinyltransferase, found in Burkholderia lata (strain ATCC 17760 / DSM 23089 / LMG 22485 / NCIMB 9086 / R18194 / 383).